The sequence spans 364 residues: Chorismate synthase (364 aa).

NADP(+) is bound by residues R48 and R54. Residues 125–127, G282, 297–301, and R323 contribute to the FMN site; these read RSS and KPPAS.

This sequence belongs to the chorismate synthase family. Homotetramer. FMNH2 is required as a cofactor.

It carries out the reaction 5-O-(1-carboxyvinyl)-3-phosphoshikimate = chorismate + phosphate. Its pathway is metabolic intermediate biosynthesis; chorismate biosynthesis; chorismate from D-erythrose 4-phosphate and phosphoenolpyruvate: step 7/7. Its function is as follows. Catalyzes the anti-1,4-elimination of the C-3 phosphate and the C-6 proR hydrogen from 5-enolpyruvylshikimate-3-phosphate (EPSP) to yield chorismate, which is the branch point compound that serves as the starting substrate for the three terminal pathways of aromatic amino acid biosynthesis. This reaction introduces a second double bond into the aromatic ring system. The protein is Chorismate synthase of Chloroflexus aggregans (strain MD-66 / DSM 9485).